Reading from the N-terminus, the 330-residue chain is tRNA U34 carboxymethyltransferase (330 aa).

Residues lysine 91, tryptophan 105, lysine 110, glycine 130, 152–154 (DPS), 181–182 (IE), methionine 196, tyrosine 200, and arginine 315 each bind carboxy-S-adenosyl-L-methionine.

The protein belongs to the class I-like SAM-binding methyltransferase superfamily. CmoB family. Homotetramer.

It carries out the reaction carboxy-S-adenosyl-L-methionine + 5-hydroxyuridine(34) in tRNA = 5-carboxymethoxyuridine(34) in tRNA + S-adenosyl-L-homocysteine + H(+). Its function is as follows. Catalyzes carboxymethyl transfer from carboxy-S-adenosyl-L-methionine (Cx-SAM) to 5-hydroxyuridine (ho5U) to form 5-carboxymethoxyuridine (cmo5U) at position 34 in tRNAs. The sequence is that of tRNA U34 carboxymethyltransferase from Shewanella oneidensis (strain ATCC 700550 / JCM 31522 / CIP 106686 / LMG 19005 / NCIMB 14063 / MR-1).